A 522-amino-acid chain; its full sequence is F-box only protein 7 (522 aa).

Residues 1-88 are ubiquitin-like; it reads MRLRVRLLKR…QDDIPAPNIP (88 aa). A disordered region spans residues 85 to 144; it reads PNIPSSTDSEHSSLQNNEQPSLATSSNQTSMQDEQPSDSFQGQAAQSGVWNDDSMLGPSQ. The segment covering 87–133 has biased composition (polar residues); sequence IPSSTDSEHSSLQNNEQPSLATSSNQTSMQDEQPSDSFQGQAAQSGV. The interval 92–129 is important for interaction with PINK1; the sequence is DSEHSSLQNNEQPSLATSSNQTSMQDEQPSDSFQGQAA. Residues 129 to 169 form an important for interaction with CDK6 region; sequence AQSGVWNDDSMLGPSQNFEAESIQDNAHMAEGTGFYPSEPM. An important for dimerization and interaction with PSMF1 region spans residues 180 to 324; sequence PHSLETLYQS…PLLAFTRQAL (145 aa). Residues 329–375 form the F-box domain; that stretch reads VFGLVVLPLELKLRIFRLLDVRSVLSLSAVCRDLFTASNDPLLWRFL. The interval 381-522 is important for interaction with CDK6; that stretch reads RDNTVRVQDT…RPTDGRLSFM (142 aa). Residues R432 and R451 each carry the omega-N-methylarginine modification. Positions 481-484 match the RFDP motif motif; it reads RFDP. The segment at 483 to 522 is disordered; it reads DPVGPLPGPNPILPGRGGPNDRFPFRPSRGRPTDGRLSFM. Asymmetric dimethylarginine is present on R518.

As to quaternary structure, part of the SCF (SKP1-CUL1-F-box) E3 ubiquitin-protein ligase complex SCF(FBXO7) formed of CUL1, SKP1, RBX1 and FBXO7. Interacts via its C-terminal proline-rich region with DLGAP5. Interacts with BIRC2. Interacts with CDK6 and promotes its interaction with D-type cyclin. Interacts with PSMF1. Interacts (via the N-terminal Ubl domain) with PRKN. Interact (via N-terminal region) with PINK1. In terms of assembly, interact (via N-terminal region) with PINK1.

Its subcellular location is the cytoplasm. It is found in the nucleus. The protein resides in the mitochondrion. It localises to the cytosol. It participates in protein modification; protein ubiquitination. Functionally, substrate recognition component of a SCF (SKP1-CUL1-F-box protein) E3 ubiquitin-protein ligase complex which mediates the ubiquitination and subsequent proteasomal degradation of target proteins and plays a role in several biological processes such as cell cycle, cell proliferation, or maintenance of chromosome stability. Recognizes and ubiquitinates BIRC2 and the cell cycle regulator DLGAP5. Plays a role downstream of PINK1 in the clearance of damaged mitochondria via selective autophagy (mitophagy) by targeting PRKN to dysfunctional depolarized mitochondria. Promotes MFN1 ubiquitination. Mediates the ubiquitination and proteasomal degradation of UXT isoform 2, thereby impairing the NF-kappa-B signaling pathway. Inhibits NF-kappa-B pathway also by promoting the ubiquitination of TRAF2. Affects the assembly state and activity of the proteasome in the cells including neurons by ubiquitinating the proteasomal subunit PSMA2 via 'Lys-63'-linked polyubiquitin chains. Promotes 'Lys-48'-linked polyubiquitination SIRT7, leading to the hydrogen peroxide-induced cell death. This is F-box only protein 7 (FBXO7) from Homo sapiens (Human).